A 279-amino-acid chain; its full sequence is Inhibitor of growth protein 1 (279 aa).

Residues 115-206 (AHQDISDGTG…EASPADLPID (92 aa)) are disordered. Lys135 participates in a covalent cross-link: Glycyl lysine isopeptide (Lys-Gly) (interchain with G-Cter in SUMO2). The segment covering 154-171 (RNNENRENASNNHDHDDI) has biased composition (basic and acidic residues). A compositionally biased stretch (basic residues) spans 179-191 (KKAKTSKKKKRSK). The PHD-type zinc-finger motif lies at 210–259 (PTYCLCNQVSYGEMIGCDNDECPIEWFHFSCVGLNHKPKGKWYCPKCRGE). Positions 213, 215, 226, 231, 237, 240, 253, and 256 each coordinate Zn(2+). The interval 262 to 279 (KTMDKALEKSKKERAYNR) is PBR.

This sequence belongs to the ING family. In terms of assembly, interacts with H3K4me3 and to a lesser extent with H3K4me2. Isoform 2 interacts with RSL1D1. As to expression, in the adult, widely expressed with highest levels in thymus and testis.

The protein localises to the nucleus. Its function is as follows. Isoform 1 inhibits p53-dependent transcriptional activation and may function as an oncoprotein. Isoform 2 acts as a negative growth regulator by cooperating with p53 in transcriptional activation of p53-responsive genes and may act as a tumor suppressor. The protein is Inhibitor of growth protein 1 (Ing1) of Mus musculus (Mouse).